A 408-amino-acid polypeptide reads, in one-letter code: G2/mitotic-specific cyclin-B (408 aa).

It belongs to the cyclin family. Cyclin AB subfamily. In terms of assembly, interacts with the CDC2 protein kinase to form a serine/threonine kinase holoenzyme complex also known as maturation promoting factor (MPF). The cyclin subunit imparts substrate specificity to the complex.

In terms of biological role, essential for the control of the cell cycle at the G2/M (mitosis) transition. This chain is G2/mitotic-specific cyclin-B, found in Patella vulgata (Common limpet).